The sequence spans 888 residues: G-protein coupled receptor family C group 6 member A (888 aa).

The first 15 residues, 1–15, serve as a signal peptide directing secretion; the sequence is MALLMTCFVIVFAAS. The Extracellular portion of the chain corresponds to 16-568; it reads QPCQTPDDLV…KEMEYLDSLA (553 aa). N-linked (GlcNAc...) asparagine glycosylation is found at asparagine 251, asparagine 322, asparagine 532, and asparagine 544. Residues 569–589 form a helical membrane-spanning segment; sequence ILLLALSLLGILFVLAIGIIF. The Cytoplasmic segment spans residues 590–604; it reads TRNLNTPVVKSSGEL. A helical transmembrane segment spans residues 605 to 625; sequence MVRYVILFCHFLNFAGTGFFI. Residues 626-641 are Extracellular-facing; the sequence is REPQSFTCKTRQTLIC. A helical membrane pass occupies residues 642 to 662; the sequence is MSFTLCISYILMKSLKILLAF. Residues 663–676 are Cytoplasmic-facing; sequence SSKLQNFLKCFYKP. Residues 677–697 traverse the membrane as a helical segment; sequence IPIIFTCTGIVVVCTLLIFAA. Residues 698–718 lie on the Extracellular side of the membrane; that stretch reads PAVGQNVSLPRVIIFECEEGS. The chain crosses the membrane as a helical span at residues 719-739; it reads ILAFGSMLGYAAILAFMCFIC. Topologically, residues 740–754 are cytoplasmic; that stretch reads AFKGRKFPENYNEAK. Residues 755-775 form a helical membrane-spanning segment; it reads FITFGMLIYFIAWITFIPIYT. The Extracellular segment spans residues 776-779; the sequence is FGKY. The helical transmembrane segment at 780 to 800 threads the bilayer; the sequence is MLVVEIIIILISNYGICCMFF. Residues 801–888 are Cytoplasmic-facing; that stretch reads PKCYVILSKQ…ALPPKRISSI (88 aa).

This sequence belongs to the G-protein coupled receptor 3 family. In terms of assembly, homodimer; disulfide-linked.

It is found in the cell membrane. Its function is as follows. Receptor activated by multiple ligands, including osteocalcin (BGLAP), basic amino acids, and various cations. Activated by amino acids with a preference for basic amino acids such as L-Lys, L-Arg and L-ornithine but also by small and polar amino acids. The L-alpha amino acids respond is augmented by divalent cations Ca(2+) and Mg(2+). Seems to act through a G(q)/G(11) and G(i)-coupled pathway. Regulates testosterone production by acting as a ligand for uncarboxylated osteocalcin hormone: osteocalcin-binding at the surface of Leydig cells initiates a signaling response that promotes the expression of enzymes required for testosterone synthesis in a CREB-dependent manner. Mediates the non-genomic effects of androgens in multiple tissue. May coordinate nutritional and hormonal anabolic signals through the sensing of extracellular amino acids, osteocalcin, divalent ions and its responsiveness to anabolic steroids. This chain is G-protein coupled receptor family C group 6 member A (GPRC6A), found in Bos taurus (Bovine).